The following is a 740-amino-acid chain: Death domain-associated protein 6 (740 aa).

Residues 1-55 (MATANSIIVLDDDDEDEAAAQPGPSHPLPNAASPGAEAPSSSEPHGARGSSSSGG) form a disordered region. Positions 1–160 (MATANSIIVL…TSNEPSGNNP (160 aa)) are necessary for interaction with USP7 and ATRX. Residue Ser25 is modified to Phosphoserine. Residues 29-55 (PNAASPGAEAPSSSEPHGARGSSSSGG) are compositionally biased toward low complexity. Lys142 participates in a covalent cross-link: Glycyl lysine isopeptide (Lys-Gly) (interchain with G-Cter in SUMO2). The interval 147–185 (PAATTSNEPSGNNPPTHLSLDPTNAENTASQSPRTRGSR) is disordered. Polar residues predominate over residues 149-181 (ATTSNEPSGNNPPTHLSLDPTNAENTASQSPRT). Ser178 and Ser213 each carry phosphoserine. Coiled coils occupy residues 180–217 (RTRG…ELDD) and 358–399 (ARRL…ARLQ). The interval 183 to 417 (GSRRQIQRLE…TPEASLDSGE (235 aa)) is interaction with histone H3.3. Residues 347–570 (GVDPALSDPV…SPVSQLFELE (224 aa)) are necessary for interaction with USP7. Residues 384-724 (DKSEEGERKK…PRPGTCKTSV (341 aa)) form a disordered region. The Nuclear localization signal signature appears at 391–395 (RKKRR). Phosphoserine is present on residues Ser412 and Ser424. A coiled-coil region spans residues 430–489 (ASRAETDDEDDEESDEEEEEEEEEEEEEATDSEEEEDLEQMQEGQEDDEEEDEEEEAAAG). The span at 435 to 486 (TDDEDDEESDEEEEEEEEEEEEEATDSEEEEDLEQMQEGQEDDEEEDEEEEA) shows a compositional bias: acidic residues. Thr459 bears the Phosphothreonine mark. A phosphoserine mark is found at Ser495 and Ser498. Residues 496 to 505 (PMSSLQISNE) are compositionally biased toward polar residues. Residues 501 to 625 (QISNEKNLEP…GVSPHNWGDS (125 aa)) form an interaction with MAP3K5 region. An N6-acetyllysine modification is found at Lys512. A compositionally biased stretch (polar residues) spans 514-524 (ISRSSGEQQNK). Residues 529–542 (SPSLLSEEPLAPSS) show a composition bias toward low complexity. The segment covering 551-561 (QPEELTLEEES) has biased composition (acidic residues). Ser561 and Ser580 each carry phosphoserine. Over residues 578-590 (TPSSVETDISSSR) the composition is skewed to polar residues. Residues 626–740 (GPPCKKSRKE…EEIIVLSDSD (115 aa)) form an interaction with SPOP region. (Microbial infection) Interaction with Puumala hantavirus nucleoprotein regions lie at residues 627–634 (PPCKKSRK) and 658–663 (KNGKKI). The Nuclear localization signal signature appears at 628-634 (PCKKSRK). Residues Lys630 and Lys631 each participate in a glycyl lysine isopeptide (Lys-Gly) (interchain with G-Cter in SUMO1) cross-link. A compositionally biased stretch (basic and acidic residues) spans 650-660 (ERQRSVHEKNG). 2 positions are modified to phosphoserine: Ser668 and Ser671. Positions 673–683 (LASLAPVADSS) are enriched in low complexity. Ser688, Ser702, Ser737, and Ser739 each carry phosphoserine. Residues 693–711 (LVTSSLCIPSPARLSQTPH) are compositionally biased toward polar residues. The tract at residues 733–740 (IIVLSDSD) is sumo interaction motif (SIM).

It belongs to the DAXX family. As to quaternary structure, homomultimer. Interacts (via C-terminus) with TNFRSF6 (via death domain). Interacts with PAX5, SLC2A4/GLUT4, MAP3K5, TGFBR2, phosphorylated dimeric HSPB1/HSP27, CENPC, ETS1, sumoylated PML, UBE2I, MCRS1 and TP53. Interacts (via N-terminus) with HIPK2 and HIPK3. Interacts with HIPK1, which induces translocation from PML/POD/ND10 nuclear bodies to chromatin and enhances association with HDAC1. Interacts (non-phosphorylated) with PAX3, PAX7, DEK, HDAC1, HDAC2, HDAC3, acetylated histone H4 and histones H2A, H2B, H3, H3.3 and H4. Interacts with SPOP; mediating CUL3-dependent proteasomal degradation. Interacts with CBP; the interaction is dependent the sumoylation of CBP and suppresses CBP transcriptional activity via recruitment of HDAC2 directly in the complex with TP53 and HIPK2. Interacts with AXIN1; the interaction stimulates the interaction of DAXX with TP53, stimulates 'Ser-46' phosphorylation of TP53 on and induces cell death on UV irradiation. Interacts with MDM2; the interaction is direct. Interacts with USP7; the interaction is direct and independent of MDM2 and TP53. Part of a complex with DAXX, MDM2 and USP7 under non-stress conditions. Interacts (via N-terminus) with RASSF1 (via C-terminus); the interaction is independent of MDM2 and TP53; RASSF1 isoform A disrupts interactions among MDM2, DAXX and USP7, thus contributing to the efficient activation of TP53 by promoting MDM2 self-ubiquitination in cell-cycle checkpoint control in response to DNA damage. Interacts with ATRX to form the chromatin remodeling complex ATRX:DAXX. Interacts with HSF1 (via homotrimeric form preferentially); this interaction relieves homotrimeric HSF1 from repression of its transcriptional activity by HSP90-dependent multichaperone complex upon heat shock. Interacts with SUMO1P1/SUMO5. In terms of assembly, (Microbial infection) Interacts with human cytomegalovirus/HHV-5 tegument phosphoprotein pp71 and protein UL123. (Microbial infection) Interacts with Epstein-Barr virus protein BNRF1. As to quaternary structure, (Microbial infection) Interacts with human adenovirus 5 E1B-55K protein; this interaction might alterate the normal interactions of DAXX, PML, and TP53, which may contribute to cell transformation. In terms of assembly, (Microbial infection) Interacts with Puumala hantavirus nucleoprotein. Post-translationally, sumoylated with SUMO1 on multiple lysine residues. In terms of processing, phosphorylated by HIPK1 upon glucose deprivation. Polyubiquitinated; which is promoted by CUL3 and SPOP and results in proteasomal degradation. Ubiquitinated by MDM2; inducing its degradation. Deubiquitinated by USP7; leading to stabilize it. In terms of tissue distribution, ubiquitous.

The protein localises to the cytoplasm. The protein resides in the nucleus. Its subcellular location is the nucleoplasm. It is found in the PML body. It localises to the nucleolus. The protein localises to the chromosome. The protein resides in the centromere. Its function is as follows. Transcription corepressor known to repress transcriptional potential of several sumoylated transcription factors. Down-regulates basal and activated transcription. Its transcription repressor activity is modulated by recruiting it to subnuclear compartments like the nucleolus or PML/POD/ND10 nuclear bodies through interactions with MCSR1 and PML, respectively. Seems to regulate transcription in PML/POD/ND10 nuclear bodies together with PML and may influence TNFRSF6-dependent apoptosis thereby. Inhibits transcriptional activation of PAX3 and ETS1 through direct protein-protein interactions. Modulates PAX5 activity; the function seems to involve CREBBP. Acts as an adapter protein in a MDM2-DAXX-USP7 complex by regulating the RING-finger E3 ligase MDM2 ubiquitination activity. Under non-stress condition, in association with the deubiquitinating USP7, prevents MDM2 self-ubiquitination and enhances the intrinsic E3 ligase activity of MDM2 towards TP53, thereby promoting TP53 ubiquitination and subsequent proteasomal degradation. Upon DNA damage, its association with MDM2 and USP7 is disrupted, resulting in increased MDM2 autoubiquitination and consequently, MDM2 degradation, which leads to TP53 stabilization. Acts as a histone chaperone that facilitates deposition of histone H3.3. Acts as a targeting component of the chromatin remodeling complex ATRX:DAXX which has ATP-dependent DNA translocase activity and catalyzes the replication-independent deposition of histone H3.3 in pericentric DNA repeats outside S-phase and telomeres, and the in vitro remodeling of H3.3-containing nucleosomes. Does not affect the ATPase activity of ATRX but alleviates its transcription repression activity. Upon neuronal activation associates with regulatory elements of selected immediate early genes where it promotes deposition of histone H3.3 which may be linked to transcriptional induction of these genes. Required for the recruitment of histone H3.3:H4 dimers to PML-nuclear bodies (PML-NBs); the process is independent of ATRX and facilitated by ASF1A; PML-NBs are suggested to function as regulatory sites for the incorporation of newly synthesized histone H3.3 into chromatin. In case of overexpression of centromeric histone variant CENPA (as found in various tumors) is involved in its mislocalization to chromosomes; the ectopic localization involves a heterotypic tetramer containing CENPA, and histones H3.3 and H4 and decreases binding of CTCF to chromatin. Proposed to mediate activation of the JNK pathway and apoptosis via MAP3K5 in response to signaling from TNFRSF6 and TGFBR2. Interaction with HSPB1/HSP27 may prevent interaction with TNFRSF6 and MAP3K5 and block DAXX-mediated apoptosis. In contrast, in lymphoid cells JNC activation and TNFRSF6-mediated apoptosis may not involve DAXX. Shows restriction activity towards human cytomegalovirus (HCMV). Plays a role as a positive regulator of the heat shock transcription factor HSF1 activity during the stress protein response. The protein is Death domain-associated protein 6 (DAXX) of Homo sapiens (Human).